Reading from the N-terminus, the 259-residue chain is Phosphatidylglycerol--prolipoprotein diacylglyceryl transferase (259 aa).

Helical transmembrane passes span 9-29 (IGPF…VLAV), 47-67 (IDFI…YYVI), 83-103 (IWNG…VLFI), and 109-129 (VLNP…AQAI). Arg131 contributes to the a 1,2-diacyl-sn-glycero-3-phospho-(1'-sn-glycerol) binding site. Transmembrane regions (helical) follow at residues 167–187 (MPTF…ICYL), 194–214 (LLEG…RFVI), and 227–247 (LRVS…FVIL).

It belongs to the Lgt family.

It is found in the cell membrane. The enzyme catalyses L-cysteinyl-[prolipoprotein] + a 1,2-diacyl-sn-glycero-3-phospho-(1'-sn-glycerol) = an S-1,2-diacyl-sn-glyceryl-L-cysteinyl-[prolipoprotein] + sn-glycerol 1-phosphate + H(+). The protein operates within protein modification; lipoprotein biosynthesis (diacylglyceryl transfer). In terms of biological role, catalyzes the transfer of the diacylglyceryl group from phosphatidylglycerol to the sulfhydryl group of the N-terminal cysteine of a prolipoprotein, the first step in the formation of mature lipoproteins. The polypeptide is Phosphatidylglycerol--prolipoprotein diacylglyceryl transferase (Streptococcus uberis (strain ATCC BAA-854 / 0140J)).